The chain runs to 61 residues: Photosystem II reaction center protein K (61 aa).

The propeptide occupies 1–24 (MINIVSLVCIYINSVPYSSIFFLD). A helical transmembrane segment spans residues 36-56 (IVDIMPVIPLFFFLLAFVWQA).

The protein belongs to the PsbK family. In terms of assembly, PSII is composed of 1 copy each of membrane proteins PsbA, PsbB, PsbC, PsbD, PsbE, PsbF, PsbH, PsbI, PsbJ, PsbK, PsbL, PsbM, PsbT, PsbX, PsbY, PsbZ, Psb30/Ycf12, at least 3 peripheral proteins of the oxygen-evolving complex and a large number of cofactors. It forms dimeric complexes.

The protein resides in the plastid. The protein localises to the chloroplast thylakoid membrane. Its function is as follows. One of the components of the core complex of photosystem II (PSII). PSII is a light-driven water:plastoquinone oxidoreductase that uses light energy to abstract electrons from H(2)O, generating O(2) and a proton gradient subsequently used for ATP formation. It consists of a core antenna complex that captures photons, and an electron transfer chain that converts photonic excitation into a charge separation. This Lotus japonicus (Lotus corniculatus var. japonicus) protein is Photosystem II reaction center protein K.